Reading from the N-terminus, the 118-residue chain is Large ribosomal subunit protein bL20 (118 aa).

The protein belongs to the bacterial ribosomal protein bL20 family.

Binds directly to 23S ribosomal RNA and is necessary for the in vitro assembly process of the 50S ribosomal subunit. It is not involved in the protein synthesizing functions of that subunit. The polypeptide is Large ribosomal subunit protein bL20 (Alteromonas mediterranea (strain DSM 17117 / CIP 110805 / LMG 28347 / Deep ecotype)).